The sequence spans 1174 residues: MKALMVRTDFSLGESALKAENAVKIARDAGYTAVISADSMNIASVIPLQRAAGDDMAVICGVKLNVVDDPTYEHRARLAKESERCMESLVRDRSYCFTALIKNEQGYRDVCELMTLANKREQFYFVPRLALDQLAAAYAKGNIILLTSDIGSVFQRRDFAKIIGTLVTAGGRDNFYSVVYPHPTPFYDQINVRAMKVASALKIEPVAFYPAYYEAVDDADIKDIAHMVTNNIKIDQPHRLRIPHQRDNAVNGRRHLLEALKAFSVRMDVPVTAAMASTTQDTIIEACTWRWHELPPALPKMADDEPATLMKLAVAGLRKRLTTKEFGYTPPASEHRVYVDRLKYEMDTLTRLGFCGYFLMVRDLMNHSRETGIPVGPGRGSSAGSLVAWCIGITNVDPIRHGLLFERFINPERLDLPDADLDFSQARRHEVIEYLNERYGEDYVAGIPNFTYLGAASALRDTARIYGVDAADMAVSKEFKNLEDDSLSLEELREQLASLDKYATKYPEAFKAACKLQSLMRGFGRHAAGMIVAGVPLVERTPVELRGNARCIAFDKRYCEAMGLIKLDVLGLATLDLLDSAKRYIKESTGEDINLDAIPLDDRKVLDGFAAGYTQGVFQLESGPMRKLLKDLGGGIEPMSFKTVVATTALFRPGPIQSGMLDDYVSVAKGFMAPQSLHPVLDELTAETNGVILYQEQTMNATRLLAGFTMAEADGVRKAIGKKDMEKMKSMGEKFVVQAQAGWIDVEMEDGTTQRIHRAEHFKCEDGALRTVEEALEAGVKLPMAAVRVTGSQPGLSETKAKEIWDAFEKNGAYQFNKSHPVAYSLISYQSMWLKTHYPAEFFAAALTILGEDKHQGLVKDALTYGIHVLPPDVNVSSNRIEIRTLEDGSQVLYAPFSAVKGCSENGCQAIMRAREKVGGKFESLEQFEEAVEKRACACNSRVRESLQKVGAFASIEPGSLPATDPERLRDQAELMGNLVIDAVKASRPFEMNPKRSAEVNVLMTRMAAEMGLGDDLIRPSIGIKPKIMVILDNANGNDGRTGYFMENGYDDFKAKLLTAGDLRMGDLYVTGVCKKVKDKEKDYTKDEIGQFTDFMREEINLVRPTYVLTCGSRATSLFNNKSKPSDLVGRKEYLPELDVTVFYGFNPNILYFRPEEGEKLEAILAEVAETISK.

This sequence belongs to the DNA polymerase type-C family. DnaE subfamily. DNA polymerase III contains a core (composed of alpha, epsilon and theta chains) that associates with a tau subunit. This core dimerizes to form the PolIII' complex. PolIII' associates with the gamma complex (composed of gamma, delta, delta', psi and chi chains) and with the beta chain to form the complete DNA polymerase III complex.

Its subcellular location is the cytoplasm. The enzyme catalyses DNA(n) + a 2'-deoxyribonucleoside 5'-triphosphate = DNA(n+1) + diphosphate. In terms of biological role, DNA polymerase III is a complex, multichain enzyme responsible for most of the replicative synthesis in bacteria. This DNA polymerase also exhibits 3' to 5' exonuclease activity. The alpha chain is the DNA polymerase. In Yersinia pestis, this protein is DNA polymerase III subunit alpha (dnaE).